The sequence spans 238 residues: Transcription factor MYB27 (238 aa).

HTH myb-type domains follow at residues 6 to 58 (EETL…MNYL) and 59 to 113 (NPTL…RKKQ). Positions 31-38 (ERRWDSLA) match the Nuclear localization signal motif. DNA-binding regions (H-T-H motif) lie at residues 34–58 (WDSLAIVSGLKRSGKSCRLRWMNYL) and 86–109 (WSKIARRLPGRTDNEIKNYWRTHY).

It localises to the nucleus. The protein is Transcription factor MYB27 of Arabidopsis thaliana (Mouse-ear cress).